Consider the following 1155-residue polypeptide: Probable translation initiation factor IF-2 (1155 aa).

Residues 237–367 form the DOD-type homing endonuclease domain; sequence FAGVMFGDGC…LSILLLRFEI (131 aa). In terms of domain architecture, tr-type G spans 561-781; it reads TTETHNFIAN…VAGLAQKFLE (221 aa). GTP is bound by residues 634 to 638 and 688 to 691; these read DTPGH and NKID.

This sequence belongs to the TRAFAC class translation factor GTPase superfamily. Classic translation factor GTPase family. IF-2 subfamily. This protein undergoes a protein self splicing that involves a post-translational excision of the intervening region (intein) followed by peptide ligation.

Its function is as follows. Function in general translation initiation by promoting the binding of the formylmethionine-tRNA to ribosomes. Seems to function along with eIF-2. This is Probable translation initiation factor IF-2 (infB) from Methanocaldococcus jannaschii (strain ATCC 43067 / DSM 2661 / JAL-1 / JCM 10045 / NBRC 100440) (Methanococcus jannaschii).